The following is a 210-amino-acid chain: Somatotropin-2 (210 aa).

A signal peptide spans methionine 1 to alanine 22. Residue histidine 38 coordinates Zn(2+). Residues cysteine 71 and cysteine 183 are joined by a disulfide bond. Glutamate 192 serves as a coordination point for Zn(2+). Cysteine 200 and cysteine 208 are disulfide-bonded.

The protein belongs to the somatotropin/prolactin family.

The protein localises to the secreted. Growth hormone plays an important role in growth control and is involved in the regulation of several anabolic processes. Implicated as an osmoregulatory substance important for seawater adaptation. This is Somatotropin-2 (gh2) from Oncorhynchus nerka (Sockeye salmon).